The chain runs to 336 residues: Galactose/methyl galactoside import permease protein MglC (336 aa).

Topologically, residues 1-16 are periplasmic; that stretch reads MSALNKKSFLTYLKEG. Residues 17 to 37 traverse the membrane as a helical segment; the sequence is GIYVVLLVLLAIIIFQDPTFL. At 38-52 the chain is on the cytoplasmic side; the sequence is SLLNLSNILTQSSVR. A helical membrane pass occupies residues 53–73; it reads IIIALGVAGLIVTQGTDLSAG. The Periplasmic segment spans residues 74 to 106; the sequence is RQVGLAAVVAATLLQSMDNANKVFPEMATMPIA. The next 2 membrane-spanning stretches (helical) occupy residues 107–127 and 128–148; these read LVIL…GLII and AYLN…VYGI. Residues 149–180 lie on the Periplasmic side of the membrane; it reads NSLYYDFVGASPISGFDSGFSTFAQGFVALGS. A helical membrane pass occupies residues 181–201; sequence FRLSYITFYALIAVAFVWVLW. Over 202 to 226 the chain is Cytoplasmic; that stretch reads NKTRFGKNIFAIGGNPEAAKVSGVN. The helical transmembrane segment at 227–247 threads the bilayer; it reads VGLNLLMIYALSGVFYAFGGM. The Periplasmic portion of the chain corresponds to 248 to 256; that stretch reads LEAGRIGSA. The helical transmembrane segment at 257–277 threads the bilayer; that stretch reads TNNLGFMYELDAIAACVVGGV. A topological domain (cytoplasmic) is located at residue S278. Residues 279 to 299 traverse the membrane as a helical segment; it reads FSGGVGTVIGVVTGVIIFTVI. The Periplasmic portion of the chain corresponds to 300–305; that stretch reads NYGLTY. Residues 306-326 form a helical membrane-spanning segment; that stretch reads IGVNPYWQYIIKGAIIIFAVA. Topologically, residues 327–336 are cytoplasmic; the sequence is LDSLKYARKK.

It belongs to the binding-protein-dependent transport system permease family. AraH/RbsC subfamily. The complex is composed of one ATP-binding protein (MglA), two transmembrane proteins (MglC) and a solute-binding protein (MglB).

Its subcellular location is the cell inner membrane. Its function is as follows. Part of the ABC transporter complex MglABC involved in galactose/methyl galactoside import. Probably responsible for the translocation of the substrate across the membrane. In Escherichia coli (strain K12), this protein is Galactose/methyl galactoside import permease protein MglC (mglC).